The sequence spans 323 residues: MPVHSREKKESNHEEMEVDFAEQEGSSSEDEDTESSSVSEDGESSEMDDEDCERRRMECIDEMTNLEKQFTDLKDQLYKERLNQVDAKLQEVMSGKAAEYLEPLATLQENMQIRTKVAGIYRELCLESVKNKYDCETQAAFQHWESEKLLLFDTVQTELEEKIRRLEEDRHSIDITSELWNDELQSRKNKKKDPFSPDKKKKPVVVSGPYIVYMLQDLDILEDWTAIRKAMATLGPHRVKTDASSKIDKLQHNARSEDGRLFYDGEWYSRGQAITIDKKDEYPTSAVITTINHDEVWFKRVDGSKSKLYVSQLQKGKYTVKHA.

The segment covering 1–15 has biased composition (basic and acidic residues); the sequence is MPVHSREKKESNHEE. Residues 1 to 52 are disordered; sequence MPVHSREKKESNHEEMEVDFAEQEGSSSEDEDTESSSVSEDGESSEMDDEDC. The span at 16–51 shows a compositional bias: acidic residues; the sequence is MEVDFAEQEGSSSEDEDTESSSVSEDGESSEMDDED. Coiled-coil stretches lie at residues 50–81 and 156–178; these read EDCERRRMECIDEMTNLEKQFTDLKDQLYKER and QTELEEKIRRLEEDRHSIDITSE.

The protein belongs to the BRMS1 family.

The protein resides in the nucleus. Its function is as follows. Involved in the histone deacetylase (HDAC1)-dependent transcriptional repression activity. This chain is Breast cancer metastasis-suppressor 1-like protein-A (brms1la), found in Danio rerio (Zebrafish).